The sequence spans 204 residues: Holliday junction resolvase RecU (204 aa).

Residues threonine 89, aspartate 91, aspartate 104, and glutamine 123 each coordinate Mg(2+).

This sequence belongs to the RecU family. The cofactor is Mg(2+).

It localises to the cytoplasm. It catalyses the reaction Endonucleolytic cleavage at a junction such as a reciprocal single-stranded crossover between two homologous DNA duplexes (Holliday junction).. In terms of biological role, endonuclease that resolves Holliday junction intermediates in genetic recombination. Cleaves mobile four-strand junctions by introducing symmetrical nicks in paired strands. Promotes annealing of linear ssDNA with homologous dsDNA. Required for DNA repair, homologous recombination and chromosome segregation. The protein is Holliday junction resolvase RecU of Leuconostoc mesenteroides subsp. mesenteroides (strain ATCC 8293 / DSM 20343 / BCRC 11652 / CCM 1803 / JCM 6124 / NCDO 523 / NBRC 100496 / NCIMB 8023 / NCTC 12954 / NRRL B-1118 / 37Y).